We begin with the raw amino-acid sequence, 202 residues long: Protein-methionine-sulfoxide reductase heme-binding subunit MsrQ (202 aa).

The next 6 helical transmembrane spans lie at 8–28, 42–62, 75–95, 110–130, 147–167, and 169–189; these read LAVF…AWIF, LGLG…LQKL, LGLW…VFIL, PYII…ITSN, LVYL…RADL, and EWTL…PSIA.

This sequence belongs to the MsrQ family. In terms of assembly, heterodimer of a catalytic subunit (MsrP) and a heme-binding subunit (MsrQ). The cofactor is FMN. Heme b serves as cofactor.

The protein resides in the cell inner membrane. In terms of biological role, part of the MsrPQ system that repairs oxidized periplasmic proteins containing methionine sulfoxide residues (Met-O), using respiratory chain electrons. Thus protects these proteins from oxidative-stress damage caused by reactive species of oxygen and chlorine generated by the host defense mechanisms. MsrPQ is essential for the maintenance of envelope integrity under bleach stress, rescuing a wide series of structurally unrelated periplasmic proteins from methionine oxidation. MsrQ provides electrons for reduction to the reductase catalytic subunit MsrP, using the quinone pool of the respiratory chain. The sequence is that of Protein-methionine-sulfoxide reductase heme-binding subunit MsrQ from Pseudomonas aeruginosa (strain LESB58).